Reading from the N-terminus, the 95-residue chain is uncharacterized protein (95 aa).

The chain crosses the membrane as a helical span at residues 27–47 (SFGLAIIGILLIACEIILFLT).

It localises to the membrane. This is an uncharacterized protein from Homo sapiens (Human).